The sequence spans 383 residues: tRNA-specific 2-thiouridylase MnmA (383 aa).

ATP-binding positions include 31-38 (GLSGGVDS) and Leu-57. Cys-118 serves as the catalytic Nucleophile. A disulfide bond links Cys-118 and Cys-217. Gly-143 lines the ATP pocket. An interaction with tRNA region spans residues 167–169 (KDQ). The Cysteine persulfide intermediate role is filled by Cys-217. Residues 322-323 (RY) form an interaction with tRNA region.

It belongs to the MnmA/TRMU family.

It localises to the cytoplasm. The enzyme catalyses S-sulfanyl-L-cysteinyl-[protein] + uridine(34) in tRNA + AH2 + ATP = 2-thiouridine(34) in tRNA + L-cysteinyl-[protein] + A + AMP + diphosphate + H(+). Functionally, catalyzes the 2-thiolation of uridine at the wobble position (U34) of tRNA, leading to the formation of s(2)U34. The polypeptide is tRNA-specific 2-thiouridylase MnmA (Synechococcus sp. (strain RCC307)).